The sequence spans 205 residues: Nucleoside triphosphate pyrophosphatase (205 aa).

The active-site Proton acceptor is D76.

The protein belongs to the Maf family. The cofactor is a divalent metal cation.

Its subcellular location is the cytoplasm. The catalysed reaction is a ribonucleoside 5'-triphosphate + H2O = a ribonucleoside 5'-phosphate + diphosphate + H(+). The enzyme catalyses a 2'-deoxyribonucleoside 5'-triphosphate + H2O = a 2'-deoxyribonucleoside 5'-phosphate + diphosphate + H(+). In terms of biological role, nucleoside triphosphate pyrophosphatase. May have a dual role in cell division arrest and in preventing the incorporation of modified nucleotides into cellular nucleic acids. This chain is Nucleoside triphosphate pyrophosphatase, found in Orientia tsutsugamushi (strain Boryong) (Rickettsia tsutsugamushi).